The sequence spans 86 residues: Toxin TdNa7 (86 aa).

Positions 1–20 (MTRFVLFLSCFFLIGMVVEC) are cleaved as a signal peptide. The LCN-type CS-alpha/beta domain maps to 21-83 (KDGYLMGPDG…TWERATNTCG (63 aa)). Intrachain disulfides connect Cys-31–Cys-82, Cys-35–Cys-57, Cys-43–Cys-63, and Cys-47–Cys-65. Lys-84 carries the lysine amide modification.

The protein belongs to the long (4 C-C) scorpion toxin superfamily. Sodium channel inhibitor family. Beta subfamily. Expressed by the venom gland.

It is found in the secreted. Functionally, beta toxins bind voltage-independently at site-4 of sodium channels (Nav) and shift the voltage of activation toward more negative potentials thereby affecting sodium channel activation and promoting spontaneous and repetitive firing. The chain is Toxin TdNa7 from Tityus discrepans (Venezuelan scorpion).